Reading from the N-terminus, the 191-residue chain is Peptidyl-tRNA hydrolase (191 aa).

Position 16 (tyrosine 16) interacts with tRNA. Residue histidine 21 is the Proton acceptor of the active site. TRNA-binding residues include phenylalanine 66, asparagine 68, and asparagine 114.

This sequence belongs to the PTH family. Monomer.

It is found in the cytoplasm. It carries out the reaction an N-acyl-L-alpha-aminoacyl-tRNA + H2O = an N-acyl-L-amino acid + a tRNA + H(+). Its function is as follows. Hydrolyzes ribosome-free peptidyl-tRNAs (with 1 or more amino acids incorporated), which drop off the ribosome during protein synthesis, or as a result of ribosome stalling. Catalyzes the release of premature peptidyl moieties from peptidyl-tRNA molecules trapped in stalled 50S ribosomal subunits, and thus maintains levels of free tRNAs and 50S ribosomes. The protein is Peptidyl-tRNA hydrolase of Geotalea daltonii (strain DSM 22248 / JCM 15807 / FRC-32) (Geobacter daltonii).